The sequence spans 126 residues: Calcitonin receptor-stimulating peptide 1 (126 aa).

A signal peptide spans 1–25 (MGFWKFPPFLVLSILVLYQAGMFHT). A propeptide spanning residues 26–78 (APMRSAFGSPFDPATLSEEESRLLLAAMVNDYEQMKAREMQKQRAQGSGISVQ) is cleaved from the precursor. A disulfide bond links Cys-82 and Cys-87. Gly-118 is subject to Glycine amide. Residues 123 to 126 (NFWI) constitute a propeptide that is removed on maturation.

As to expression, mainly expressed in the thyroid gland and CNS. Found in the nerve cells of cerebrum, hippocampus, hypothalamus, pons/midbrain and thalamus.

It is found in the secreted. Its function is as follows. Stimulates cAMP production in porcine kidney cell line LLC-PK1 via the calcitonin receptor (CT) but not via the CT-like (CL) receptor. This Sus scrofa (Pig) protein is Calcitonin receptor-stimulating peptide 1 (CRSP1).